The following is a 405-amino-acid chain: Argininosuccinate synthase (405 aa).

Residues 10–18 (AYSGGVDTS) and Ala38 contribute to the ATP site. Tyr89 is an L-citrulline binding site. Gly119 provides a ligand contact to ATP. L-aspartate contacts are provided by Thr121, Asn125, and Asp126. Asn125 contacts L-citrulline. 5 residues coordinate L-citrulline: Arg129, Ser177, Ser186, Glu262, and Tyr274.

This sequence belongs to the argininosuccinate synthase family. Type 1 subfamily. Homotetramer.

The protein localises to the cytoplasm. The enzyme catalyses L-citrulline + L-aspartate + ATP = 2-(N(omega)-L-arginino)succinate + AMP + diphosphate + H(+). The protein operates within amino-acid biosynthesis; L-arginine biosynthesis; L-arginine from L-ornithine and carbamoyl phosphate: step 2/3. The sequence is that of Argininosuccinate synthase from Synechococcus sp. (strain RCC307).